Reading from the N-terminus, the 346-residue chain is S-adenosylmethionine:tRNA ribosyltransferase-isomerase (346 aa).

The protein belongs to the QueA family. In terms of assembly, monomer.

Its subcellular location is the cytoplasm. The enzyme catalyses 7-aminomethyl-7-carbaguanosine(34) in tRNA + S-adenosyl-L-methionine = epoxyqueuosine(34) in tRNA + adenine + L-methionine + 2 H(+). It functions in the pathway tRNA modification; tRNA-queuosine biosynthesis. Its function is as follows. Transfers and isomerizes the ribose moiety from AdoMet to the 7-aminomethyl group of 7-deazaguanine (preQ1-tRNA) to give epoxyqueuosine (oQ-tRNA). The chain is S-adenosylmethionine:tRNA ribosyltransferase-isomerase from Borreliella afzelii (strain PKo) (Borrelia afzelii).